Reading from the N-terminus, the 61-residue chain is Large ribosomal subunit protein bL28 (61 aa).

Residues 1 to 26 (MAKDFLNGKRTHFGNKRSHALNSSRR) form a disordered region. Over residues 9–19 (KRTHFGNKRSH) the composition is skewed to basic residues.

This sequence belongs to the bacterial ribosomal protein bL28 family.

In Levilactobacillus brevis (strain ATCC 367 / BCRC 12310 / CIP 105137 / JCM 1170 / LMG 11437 / NCIMB 947 / NCTC 947) (Lactobacillus brevis), this protein is Large ribosomal subunit protein bL28.